A 691-amino-acid polypeptide reads, in one-letter code: MTESTEQTTPTNGGGLASLKLAQLQALASQLGIAGGSRMRKADLVTAISDHQRGGSVADRDAAERAAQAPAAPAAETAPAAASSEDAAPAAERPARRRSRRADADTSAPAAAQDGQPQAEAREAQTEQAPRETASDQDRSGGSEARDEGEDRPQSERRSRGRRRAGDDDAQQGQDRRSDGAQGEDGADADRRGDREDRDDNGRENGRGRNGRNGRDRDNGRDRENGRENSRDRENGRDGSREQRGDKSEDGGRGDGGRGDRSRRDDRDDEGGRNRRNRRNRNERGRNRRGRGGPEVDETELTEDDVLQPVAGILDVLDNYAFVRTSGYLPGPNDVYVSLAMVKKYGLRKGDAVVGPIAPRDGEKQQHHGGGSNRQKFNALVKISSVNGQPAVEHPQRVEFGKLVPLYPQERLRLETDPKLIGPRVIDLVSPIGKGQRGLIVSPPKAGKTMILQSIANAIKTNNPEVHLMMVLVDERPEEVTDMQRSVDGEVIASTFDRPADDHTTLAELAIERAKRLVEMGRDVVVLLDSMTRLGRAYNLAAPASGRILSGGVDSSALYPPKKFFGAARNIENGGSLTILATALVETGSRMDEVIFEEFKGTGNMELRLSRHLAERRIFPAVDVNASGTRREEALLSQEEVKIMWKLRRVLSGLEQQQALDLLTNKIKDTASNAEFLMLVSKTTLGSKGDD.

The interval 48 to 303 (ISDHQRGGSV…PEVDETELTE (256 aa)) is disordered. A compositionally biased stretch (basic and acidic residues) spans 50-64 (DHQRGGSVADRDAAE). Composition is skewed to low complexity over residues 65 to 92 (RAAQ…PAAE) and 105 to 119 (DTSA…QPQA). 2 stretches are compositionally biased toward basic and acidic residues: residues 120–158 (EARE…SERR) and 188–273 (DADR…EGGR). One can recognise a Rho RNA-BD domain in the interval 307–390 (LQPVAGILDV…VKISSVNGQP (84 aa)). ATP contacts are provided by residues 433-438 (GKGQRG), 445-450 (KAGKTM), and R476.

Belongs to the Rho family. In terms of assembly, homohexamer. The homohexamer assembles into an open ring structure.

In terms of biological role, facilitates transcription termination by a mechanism that involves Rho binding to the nascent RNA, activation of Rho's RNA-dependent ATPase activity, and release of the mRNA from the DNA template. This Micrococcus luteus (Micrococcus lysodeikticus) protein is Transcription termination factor Rho.